Reading from the N-terminus, the 162-residue chain is Protein LTO1 (162 aa).

Residues 17–53 (GFLEGQNENIKQSFLEGKQYGLQVGFQRFTLLGQMEG) form a deca-GX3 motif; required for interaction with YAE1 and the CIA complex region.

This sequence belongs to the LTO1 family. Forms a complex with YAE1; the complex bridges the interaction between the CIA complex and RLI1. Associates with the CIA complex (via its C-terminal tryptophan).

The protein localises to the nucleus. Its function is as follows. Essential for life in oxygen, but nonessential under anaerobic conditions. Required for biogenesis of the large ribosomal subunit and initiation of translation in oxygen. The complex LTO1:YAE1 functions as a target specific adapter that recruits apo-RLI1 to the cytosolic iron-sulfur protein assembly (CIA) complex machinery. This is Protein LTO1 from Saccharomyces cerevisiae (strain ATCC 204508 / S288c) (Baker's yeast).